Here is a 458-residue protein sequence, read N- to C-terminus: MIVPVLSRQALRHASVARVALPSLTRWYASYPPHTVVKMPALSPTMTSGGIGAWQKKPGDKIEPGEVLVEIETDKAQMDFEFQEEGVLAKILKDSGEKDVAVGNPIAILVEEGTDVNAFKDFTLKDAGGETSPAVPKDEPKNESTASAPTPAPTPAPEPENTSFTGRFQTALEREPNALPAAKRLAREKGIDLRNVKGSGPGGKITEEDVKKALASAPAAGAAAAAYTDVPISGMRKTIAARLKESVTENPHFFVSTNLSVSKLLKLRQALNSSADGRYKLSVNDFLIKAMGIASKRVPTVNSSWRDGVIRQFETVDVSVAVATPNGLITPIVKGVEGKGLESISAAVKELAKKARDGKLKPEEYQGGSISISNMGMNPAVQSFTAIINPPQAAILAVGAPQKVAVPVENEDGTTGVSWDEQIIVTASFDHKVVDGAVGAEWIRELKKVIENPLELLL.

The transit peptide at 1–28 (MIVPVLSRQALRHASVARVALPSLTRWY) directs the protein to the mitochondrion. In terms of domain architecture, Lipoyl-binding spans 34–110 (HTVVKMPALS…AVGNPIAILV (77 aa)). At Lys75 the chain carries N6-lipoyllysine. Residues 126 to 164 (DAGGETSPAVPKDEPKNESTASAPTPAPTPAPEPENTSF) are disordered. In terms of domain architecture, Peripheral subunit-binding (PSBD) spans 177-214 (NALPAAKRLAREKGIDLRNVKGSGPGGKITEEDVKKAL). Active-site residues include His431 and Asp435.

The protein belongs to the 2-oxoacid dehydrogenase family. The cofactor is (R)-lipoate.

It localises to the mitochondrion matrix. The enzyme catalyses N(6)-[(R)-dihydrolipoyl]-L-lysyl-[protein] + acetyl-CoA = N(6)-[(R)-S(8)-acetyldihydrolipoyl]-L-lysyl-[protein] + CoA. In terms of biological role, the pyruvate dehydrogenase complex catalyzes the overall conversion of pyruvate to acetyl-CoA and CO(2). It contains multiple copies of three enzymatic components: pyruvate dehydrogenase (E1), dihydrolipoamide acetyltransferase (E2) and lipoamide dehydrogenase (E3). The polypeptide is Dihydrolipoyllysine-residue acetyltransferase component of pyruvate dehydrogenase complex, mitochondrial (mrp-3) (Neurospora crassa (strain ATCC 24698 / 74-OR23-1A / CBS 708.71 / DSM 1257 / FGSC 987)).